The primary structure comprises 830 residues: MADRAEMFSLSTFHSLSPPGCRPPQDISLEEFDDEDLSEITDDCGLGLSYDSDHCEKDSLSLGRSEQPHPICSFQDDFQEFEMIDDNEEEDDEEEEEEEEEEEDGDRQGKAGGGPGSQALAGDSLIPSPSLEESHKLRPTTLHLTTLGAQDSLNNNNGGFTSAPPSSWQETVLRSPAQEPLKELPAPLLPAEEERHEVQSLARPGCDCEGNQPPEPPASSGGASPSSDPGIEADLRSHSSGGHEGRRSSQELSSPGSDSEDAGGARLGRMISSISETELELSSDGGSSSGRSSHLTNSIEEASSPASEPEPEPEPLHEPPRRPAFLPVGQDDTNSEYESGSESEPDLSEDADSPWLLSNLVSRMISEGSSPIRCPGQCLSPAPRLPEEAASQANSVPQDCQDPEAGPHVELVDMDTLCGPPPPAPAAPRLGPAQPGPCLFLSNPTRDTITPLWATPGRTARPGRSCSAACSEEEEEDEEEDEEDEEDAEDSVVPPGSRTTGSTAPLDASLVYDAVKYTLVVDEHTQLELVSLRRCAGLGNDSEEDSSCEASEEEAGATLLGSDQVPEDASPDSPDLTFSKKFLNVFVNSTSRSSSTESFGLFSCVVNGEEREQTHRAVFRFIPRHPDELELDVDDPVLVEAEEDDFWFRGFNMRTGERGVFPAFYAHAVPGPAKDLLGSKRSPCWVDRFDVQFLGSVEVPCHQGNGILCAAMQKIATARKLTVHLRPPASCDLEISLRGVKLSLSGGGPEFQRCSHFFQMKNISFCGCHPRNSCYFGFITKHPLLSRFACHVFVSQESMRPVARSVGRAFLEYYQEHLAFACPTEDIYLE.

Disordered stretches follow at residues 1–26 (MADRAEMFSLSTFHSLSPPGCRPPQD), 44–354 (CGLG…ADSP), 367–438 (EGSS…PGPC), 452–504 (LWAT…GSTA), and 539–574 (GNDSEEDSSCEASEEEAGATLLGSDQVPEDASPDSP). Residues 77–105 (DFQEFEMIDDNEEEDDEEEEEEEEEEEDG) are compositionally biased toward acidic residues. The interval 111–278 (AGGGPGSQAL…RMISSISETE (168 aa)) is JNK-binding domain (JBD). Residues 142 to 172 (LHLTTLGAQDSLNNNNGGFTSAPPSSWQETV) show a composition bias toward polar residues. 2 stretches are compositionally biased toward low complexity: residues 176 to 190 (PAQEPLKELPAPLLP) and 218 to 227 (ASSGGASPSS). Positions 233–249 (ADLRSHSSGGHEGRRSS) are enriched in basic and acidic residues. The necessary for interaction with FGF13 stretch occupies residues 242–504 (GHEGRRSSQE…PGSRTTGSTA (263 aa)). Ser257, Ser304, and Ser307 each carry phosphoserine. A compositionally biased stretch (low complexity) spans 271–307 (ISSISETELELSSDGGSSSGRSSHLTNSIEEASSPAS). The segment covering 333–352 (TNSEYESGSESEPDLSEDAD) has biased composition (acidic residues). Residues 427-437 (APRLGPAQPGP) are compositionally biased toward low complexity. Acidic residues-rich tracts occupy residues 471–490 (SEEEEEDEEEDEEDEEDAED) and 541–555 (DSEEDSSCEASEEEA). Positions 610–671 (EREQTHRAVF…PAFYAHAVPG (62 aa)) constitute an SH3 domain. Residues 683-819 (PCWVDRFDVQ…FLEYYQEHLA (137 aa)) form the PID domain.

This sequence belongs to the JIP scaffold family. Forms homo- or heterooligomeric complexes. Binds specific components of the JNK signaling pathway namely JNK1, JNK2, JNK3, MAP2K7, MAP3K10, MAP3K11, MAP3K12 and MAPK13. Also binds the proline-rich domain-containing splice variant of apolipoprotein E receptor 2 (ApoER2). Binds the TPR motif-containing C-terminal of kinesin light chain. Binds the cytoplasmic tails of LRP1 and LRP2 (Megalin). Interacts with DCLK2. Interacts with FGF13; enables the interaction with MAPK13 and may regulate the MAPK8IP2 scaffolding activity. Interacts with TIAM1 and TIAM2. Interacts with SH3RF2. Highly expressed in brain. Expressed in all neurons. Also expressed in testis, primarily in the epididymal epidermis.

The protein localises to the cytoplasm. Its function is as follows. The JNK-interacting protein (JIP) group of scaffold proteins selectively mediates JNK signaling by aggregating specific components of the MAPK cascade to form a functional JNK signaling module. JIP2 inhibits IL1 beta-induced apoptosis in insulin-secreting cells. The polypeptide is C-Jun-amino-terminal kinase-interacting protein 2 (Mapk8ip2) (Mus musculus (Mouse)).